The following is a 59-amino-acid chain: Large ribosomal subunit protein bL32C (59 aa).

It belongs to the bacterial ribosomal protein bL32 family.

This chain is Large ribosomal subunit protein bL32C (rpmF3), found in Enterococcus faecalis (strain ATCC 700802 / V583).